Here is a 203-residue protein sequence, read N- to C-terminus: Outer-membrane lipoprotein LolB (203 aa).

A signal peptide spans 1 to 22 (MPVNLNHTLLLCLLVAASLLSG). A lipid anchor (N-palmitoyl cysteine) is attached at C23. C23 carries S-diacylglycerol cysteine lipidation.

Belongs to the LolB family. Monomer.

Its subcellular location is the cell outer membrane. Its function is as follows. Plays a critical role in the incorporation of lipoproteins in the outer membrane after they are released by the LolA protein. The polypeptide is Outer-membrane lipoprotein LolB (Shewanella denitrificans (strain OS217 / ATCC BAA-1090 / DSM 15013)).